Consider the following 151-residue polypeptide: Large ribosomal subunit protein bL9 (151 aa).

The protein belongs to the bacterial ribosomal protein bL9 family.

Its function is as follows. Binds to the 23S rRNA. In Pelodictyon phaeoclathratiforme (strain DSM 5477 / BU-1), this protein is Large ribosomal subunit protein bL9.